Reading from the N-terminus, the 476-residue chain is UDP-N-acetylmuramate--L-alanine ligase (476 aa).

121–127 (GAHGKTT) contributes to the ATP binding site.

Belongs to the MurCDEF family.

It is found in the cytoplasm. The catalysed reaction is UDP-N-acetyl-alpha-D-muramate + L-alanine + ATP = UDP-N-acetyl-alpha-D-muramoyl-L-alanine + ADP + phosphate + H(+). Its pathway is cell wall biogenesis; peptidoglycan biosynthesis. Its function is as follows. Cell wall formation. In Clavibacter sepedonicus (Clavibacter michiganensis subsp. sepedonicus), this protein is UDP-N-acetylmuramate--L-alanine ligase.